Reading from the N-terminus, the 249-residue chain is 5'-nucleotidase SurE (249 aa).

4 residues coordinate a divalent metal cation: D9, D10, S40, and N92.

It belongs to the SurE nucleotidase family. A divalent metal cation is required as a cofactor.

It localises to the cytoplasm. The enzyme catalyses a ribonucleoside 5'-phosphate + H2O = a ribonucleoside + phosphate. In terms of biological role, nucleotidase that shows phosphatase activity on nucleoside 5'-monophosphates. This chain is 5'-nucleotidase SurE, found in Shewanella frigidimarina (strain NCIMB 400).